The following is a 1806-amino-acid chain: Collagen alpha-1(XI) chain (1806 aa).

The first 35 residues, methionine 1–glycine 35, serve as a signal peptide directing secretion. The propeptide at alanine 36–alanine 511 is N-terminal propeptide. 2 disulfides stabilise this stretch: cysteine 61–cysteine 243 and cysteine 182–cysteine 236. The 173-residue stretch at aspartate 71–cysteine 243 folds into the Laminin G-like domain. The interval lysine 230 to histidine 419 is nonhelical region. A triple-helical region (interrupted) region spans residues glycine 420–threonine 508. A disordered region spans residues leucine 439–threonine 508. A Collagen-like 1 domain is found at glycine 442–glycine 490. 2 stretches are compositionally biased toward low complexity: residues proline 449–proline 461 and leucine 479–proline 496. The interval isoleucine 509 to alanine 511 is short nonhelical segment. Residues glutamine 512–arginine 528 form a telopeptide region. A disordered region spans residues arginine 528 to alanine 1563. Residues glycine 529–valine 1542 are triple-helical region. 4 consecutive Collagen-like domains span residues glycine 532–glycine 586, glycine 583–proline 641, glycine 616–proline 674, and glycine 643–glutamine 699. 2 stretches are compositionally biased toward gly residues: residues glycine 541–glycine 550 and glycine 583–glycine 592. The residue at position 612 (lysine 612) is an Allysine. Low complexity predominate over residues proline 641–alanine 662. A compositionally biased stretch (pro residues) spans glutamine 699–proline 710. The segment covering glutamine 717–alanine 728 has biased composition (low complexity). Positions arginine 807–lysine 816 are enriched in basic and acidic residues. Low complexity-rich tracts occupy residues lysine 875–lysine 903, arginine 918–valine 927, lysine 941–threonine 960, proline 971–isoleucine 981, arginine 1032–proline 1041, and serine 1058–proline 1074. Pro residues predominate over residues arginine 1076 to proline 1085. A compositionally biased stretch (low complexity) spans alanine 1086–valine 1110. Gly residues predominate over residues glycine 1162–glycine 1171. Composition is skewed to pro residues over residues methionine 1218–proline 1229 and glutamine 1343–arginine 1362. 2 stretches are compositionally biased toward low complexity: residues alanine 1385–proline 1394 and glutamine 1419–aspartate 1428. Collagen-like domains follow at residues glycine 1393–glycine 1450, glycine 1429–aspartate 1487, and glycine 1483–glutamate 1541. A compositionally biased stretch (pro residues) spans proline 1430–leucine 1439. An Allysine modification is found at lysine 1452. A compositionally biased stretch (low complexity) spans proline 1455–proline 1464. A compositionally biased stretch (gly residues) spans glycine 1483–glycine 1492. Composition is skewed to pro residues over residues proline 1493 to glutamine 1509 and proline 1530 to proline 1539. Residues isoleucine 1543–alanine 1563 form a nonhelical region (C-terminal) region. The propeptide at aspartate 1564 to glycine 1806 is C-terminal propeptide. The Fibrillar collagen NC1 domain occupies glutamate 1577 to leucine 1805. Cysteines 1607 and 1639 form a disulfide. The Ca(2+) site is built by aspartate 1625, asparagine 1627, glutamine 1628, cysteine 1630, and aspartate 1633. Asparagine 1640 carries an N-linked (GlcNAc...) asparagine glycan. 2 disulfide bridges follow: cysteine 1648/cysteine 1803 and cysteine 1714/cysteine 1757.

This sequence belongs to the fibrillar collagen family. Trimers composed of three different chains: alpha 1(XI), alpha 2(XI), and alpha 3(XI). Alpha 3(XI) is a post-translational modification of alpha 1(II). Alpha 1(V) can also be found instead of alpha 3(XI)=1(II). Prolines at the third position of the tripeptide repeating unit (G-X-Y) are hydroxylated in some or all of the chains. In terms of processing, N-glycosylated. Cartilage, placenta and some tumor or virally transformed cell lines. Isoforms using exon IIA or IIB are found in the cartilage while isoforms using only exon IIB are found in the tendon.

It is found in the secreted. The protein localises to the extracellular space. It localises to the extracellular matrix. May play an important role in fibrillogenesis by controlling lateral growth of collagen II fibrils. The chain is Collagen alpha-1(XI) chain (COL11A1) from Homo sapiens (Human).